Here is a 341-residue protein sequence, read N- to C-terminus: L-threonine 3-dehydrogenase (341 aa).

C38 serves as a coordination point for Zn(2+). Residues T40 and H43 each act as charge relay system in the active site. 6 residues coordinate Zn(2+): H63, E64, C93, C96, C99, and C107. Residues I175, D195, R200, 262–264, and 286–287 contribute to the NAD(+) site; these read LGI and IY.

It belongs to the zinc-containing alcohol dehydrogenase family. Homotetramer. Requires Zn(2+) as cofactor.

The protein localises to the cytoplasm. It carries out the reaction L-threonine + NAD(+) = (2S)-2-amino-3-oxobutanoate + NADH + H(+). It functions in the pathway amino-acid degradation; L-threonine degradation via oxydo-reductase pathway; glycine from L-threonine: step 1/2. Functionally, catalyzes the NAD(+)-dependent oxidation of L-threonine to 2-amino-3-ketobutyrate. In Marinomonas sp. (strain MWYL1), this protein is L-threonine 3-dehydrogenase.